Reading from the N-terminus, the 578-residue chain is Protein BONZAI 1 (578 aa).

A lipid anchor (N-myristoyl glycine) is attached at glycine 2. C2 domains follow at residues 26–163 and 176–303; these read ALGA…TSTL and QPHH…NFSL. Positions 63, 69, 122, and 124 each coordinate Ca(2+). Positions 341–560 constitute a VWFA domain; that stretch reads NFMVAIDFTA…SVVQALLAEL (220 aa).

This sequence belongs to the copine family. As to quaternary structure, interacts (via VWA domain) with BAP1 and BAP2. Interacts with HSP70-1 and HSP70-2. Ca(2+) serves as cofactor. In terms of processing, based on mass spectrometry analysis, the N-peptide must be modified and there might be additional modifications other than myristoylation. In terms of tissue distribution, expressed in roots and flowers and, at higher levels, in leaves and stems. Strongly expressed in growing tissues. Not detected in green siliques.

The protein localises to the cell membrane. Functionally, negative regulator of cell death and defense responses. Negative regulator of several R genes, including SNC1. May have effects in promoting growth and development. May function in membrane trafficking and in fusion of vesicles with plasma membrane at low temperature. Exhibits calcium-dependent phospholipid binding properties. This chain is Protein BONZAI 1 (BON1), found in Arabidopsis thaliana (Mouse-ear cress).